The chain runs to 505 residues: Histidine ammonia-lyase (505 aa).

A cross-link (5-imidazolinone (Ala-Gly)) is located at residues 141–143 (ASG). A 2,3-didehydroalanine (Ser) modification is found at serine 142.

The protein belongs to the PAL/histidase family. In terms of processing, contains an active site 4-methylidene-imidazol-5-one (MIO), which is formed autocatalytically by cyclization and dehydration of residues Ala-Ser-Gly.

The protein resides in the cytoplasm. The catalysed reaction is L-histidine = trans-urocanate + NH4(+). It participates in amino-acid degradation; L-histidine degradation into L-glutamate; N-formimidoyl-L-glutamate from L-histidine: step 1/3. This Bacillus cereus (strain 03BB102) protein is Histidine ammonia-lyase.